Reading from the N-terminus, the 502-residue chain is UPF0371 protein CLM_0396 (502 aa).

Belongs to the UPF0371 family.

The protein is UPF0371 protein CLM_0396 of Clostridium botulinum (strain Kyoto / Type A2).